The following is an 85-amino-acid chain: U4-theraphotoxin-Hhn1m (85 aa).

Positions 1–22 are cleaved as a signal peptide; that stretch reads MKVTLIAILTCAAVLVLHTTAA. A propeptide spanning residues 23–48 is cleaved from the precursor; sequence EELEAESQLVEVGMPDTELAAVDEER. Cystine bridges form between Cys-52-Cys-66, Cys-56-Cys-77, and Cys-71-Cys-82.

This sequence belongs to the neurotoxin 12 (Hwtx-2) family. 02 (Hwtx-2) subfamily. Expressed by the venom gland.

Its subcellular location is the secreted. Its function is as follows. Postsynaptic neurotoxin. In Cyriopagopus hainanus (Chinese bird spider), this protein is U4-theraphotoxin-Hhn1m.